The sequence spans 240 residues: MKGTISHRESFLTHIRQQLGKDSSSSASIQRPAWKHQVQWETNGLLSKEELVEQLKMQCQRIHTRVVETTPEEAPSALRSLMTEYGEGSVMTSGDHRFEQYGFYPMFDSLQHEGFAVTSWNAEASREENIRLAEQAAYSVVFSDYTLAESGTIVLSSHQGQGRALHFLPMMYIVCIEKSTVVPRMIQAVSTLNRLVEEGEQAKGAIHFISGPSNSADIEMNLVVGVHGPVRAVYLLIDDE.

This sequence belongs to the LutC/YkgG family.

Its function is as follows. Is involved in L-lactate degradation and allows cells to grow with lactate as the sole carbon source. The polypeptide is Lactate utilization protein C (Bacillus pumilus (strain SAFR-032)).